Reading from the N-terminus, the 591-residue chain is MFYYPNVLQRHTGCFATIWLAATRGSRLVKREYLNVNVVKTCEEILNYVLVRVQPPVAGLPRPRFSLYLSAQLQIGVIRVYFQQCQYLVEDIQHILEHLHRAQLRIRIDMEEADLPSLLLPNCLAMMETLEDAPEPFFGKMSVDPRLPSPFDIPQIRHLLEAATPEKTRKETLPEATPDPRKPDRTLATVQSPEVITLQEAEPIRMLQIEGEQDLPEISRGDLELLIAEKDDAILLEERQRGRLLRQRRASLPLDESREEPRALEGAGLVSALSPPAPAQVEGIQEALPGQVFPPEVQKMTGWEPGALLTEVTPPQELRLPAPPSTEKRLPSLQRPLPRRHRRRQLLFWDKETQISREKFEEQLQTGAHCWEYPVAQPPKRMLTSPAELFRTPTLSGWLPPELLGLWTHCAQVPQRMLRQRPQLETEETVEEERAADEEERRKTEALSEIEVLREAQEPSGPLMLSSELSLEAAEDEKSRTSLIPPEWWAWSEEGQPEPPALPMLPELPEVPMEMPPRPELSSEAVLRAVALKLQANKELDFSSLVPPLSPRKLASRVFYLLLVLSTQKILLVEQQKPYGPLLIRPGPKFP.

S149 is modified (phosphoserine). Residues 163–185 (ATPEKTRKETLPEATPDPRKPDR) show a composition bias toward basic and acidic residues. Positions 163–186 (ATPEKTRKETLPEATPDPRKPDRT) are disordered. T164 bears the Phosphothreonine mark. Position 192 is a phosphoserine (S192). Disordered stretches follow at residues 316–336 (QELRLPAPPSTEKRLPSLQRP) and 420–447 (QRPQLETEETVEEERAADEEERRKTEAL). Acidic residues predominate over residues 425–438 (ETEETVEEERAADE).

This sequence belongs to the rad21 family. Interacts (phosphorylated and unphosphorylated form) with SMC3. Interacts with SYCP3. Interacts (phosphorylated and unphosphorylated form) with SMC1B. Does not interact with SMC1A. Interacts with RAD51. Forms a complex with EWSR1, PRDM9, SYCP3 and SYCP1; complex formation is dependent of phosphorylated form of REC8 and requires PRDM9 bound to hotspot DNA; EWSR1 joins PRDM9 with the chromosomal axis through REC8. Phosphorylated. As to expression, expressed primarily in the gonads. In the testis, expressed in pachytene spermatocytes and in spermatids. Not expressed in spermatogonia or somatic cells. In the ovary, expressed only in oocytes. Low levels also detected in a number of somatic tissues including thymus, lung, liver, kidney and small intestine.

It is found in the nucleus. The protein resides in the chromosome. It localises to the centromere. Its function is as follows. Required during meiosis for separation of sister chromatids and homologous chromosomes. Proteolytic cleavage of REC8 on chromosome arms by separin during anaphase I allows for homologous chromosome separation in meiosis I and cleavage of REC8 on centromeres during anaphase II allows for sister chromatid separation in meiosis II. The sequence is that of Meiotic recombination protein REC8 homolog (Rec8) from Mus musculus (Mouse).